Consider the following 503-residue polypeptide: Glutamate--tRNA ligase (503 aa).

Positions 9-19 match the 'HIGH' region motif; the sequence is PSPTGDPHVGT. The 'KMSKS' region motif lies at 251-255; it reads KLSKR. Lys254 serves as a coordination point for ATP.

It belongs to the class-I aminoacyl-tRNA synthetase family. Glutamate--tRNA ligase type 1 subfamily. Monomer.

Its subcellular location is the cytoplasm. The catalysed reaction is tRNA(Glu) + L-glutamate + ATP = L-glutamyl-tRNA(Glu) + AMP + diphosphate. Its function is as follows. Catalyzes the attachment of glutamate to tRNA(Glu) in a two-step reaction: glutamate is first activated by ATP to form Glu-AMP and then transferred to the acceptor end of tRNA(Glu). This Saccharophagus degradans (strain 2-40 / ATCC 43961 / DSM 17024) protein is Glutamate--tRNA ligase.